The chain runs to 194 residues: Oligoribonuclease (194 aa).

In terms of domain architecture, Exonuclease spans 11–174 (LIWIDLEMTG…SDVRDSIDEL (164 aa)). The active site involves tyrosine 132.

Belongs to the oligoribonuclease family.

The protein localises to the cytoplasm. In terms of biological role, 3'-to-5' exoribonuclease specific for small oligoribonucleotides. This chain is Oligoribonuclease, found in Xanthomonas campestris pv. campestris (strain ATCC 33913 / DSM 3586 / NCPPB 528 / LMG 568 / P 25).